A 375-amino-acid chain; its full sequence is Trans-enoyl reductase iccB (375 aa).

Residue 48-51 (VDAK) coordinates NADP(+). Substrate is bound at residue 143–150 (AAVATVGL). NADP(+)-binding positions include 204–207 (SSAS), tyrosine 222, and 269–270 (LD). 289–293 (TYSQF) serves as a coordination point for substrate. 358 to 359 (IK) is a binding site for NADP(+).

The protein belongs to the zinc-containing alcohol dehydrogenase family. As to quaternary structure, monomer.

The enzyme catalyses N-[(4E,6E,10S,12Z,14E)-6,10-dimethyl-3-oxohexadeca-4,6,12,14-tetraenoyl]-L-tyrosyl-[ACP] = (3E,5S)-3-[(2E,4E,8S,10E,12Z)-1-hydroxy-4,8-dimethyltetradeca-2,4,10,12-tetraen-1-ylidene]-5-[(4-hydroxyphenyl)methyl]pyrrolidine-2,4-dione + holo-[ACP] + H(+). The protein operates within mycotoxin biosynthesis. Its function is as follows. Trans-enoyl reductase; part of the gene cluster that mediates the biosynthesis of ilicicolin H, a 4-hydroxy-2-pyridonealkaloid that has potent and broad antifungal activities by inhibiting the mitochondrial respiration chain. IccB collaborates with the hybrid PKS-NRPS synthetase iccA to assemble the backbone of ilicicolin H. The PKS portion of iccA and trans-acting enoyl reductase iccB work together to construct an octaketide, and two methyl groups are introduced by the MT domain of iccA during the chain assembly. The nascent chain is then condensed with tyrosine, catalyzed by the iliA C domain, and the resulting PKS-NRPS hybrid is offloaded by the iliA RED domain to form an advanced tetramic acid intermediate. The biosynthesis of ilicicolin H starts with formation of the tetramic acid by the hybrid PKS-NRPS synthetase iccA with the partnering trans-enoyl reductase iccB since iccA lacks a designated enoylreductase (ER) domain. The cytochrome P450 monooxygenase iccC then catalyzes the ring expansion of the tetramate to the acyclic 2-pyridone. The pericyclase iccD further converts the acyclic 2-pyridone into 8-epi-ilicicolin H. Finally, the epimerase iccE converts 8-epi-ilicicolin H into ilicicolin H via epimerization. IccA to iccE are sufficient for ilicicolin H biosynthesis and the roles of the remaining enzymes, iccF, iccG and iccH within the pathway have still to be determined. The protein is Trans-enoyl reductase iccB of Talaromyces variabilis (Penicillium variabile).